The sequence spans 383 residues: Succinyl-diaminopimelate desuccinylase (383 aa).

H72 contributes to the Zn(2+) binding site. D74 is a catalytic residue. D105 contributes to the Zn(2+) binding site. E139 serves as the catalytic Proton acceptor. The Zn(2+) site is built by E140, E168, and H356.

It belongs to the peptidase M20A family. DapE subfamily. Homodimer. Zn(2+) serves as cofactor. Requires Co(2+) as cofactor.

The catalysed reaction is N-succinyl-(2S,6S)-2,6-diaminopimelate + H2O = (2S,6S)-2,6-diaminopimelate + succinate. The protein operates within amino-acid biosynthesis; L-lysine biosynthesis via DAP pathway; LL-2,6-diaminopimelate from (S)-tetrahydrodipicolinate (succinylase route): step 3/3. Catalyzes the hydrolysis of N-succinyl-L,L-diaminopimelic acid (SDAP), forming succinate and LL-2,6-diaminopimelate (DAP), an intermediate involved in the bacterial biosynthesis of lysine and meso-diaminopimelic acid, an essential component of bacterial cell walls. The chain is Succinyl-diaminopimelate desuccinylase from Beijerinckia indica subsp. indica (strain ATCC 9039 / DSM 1715 / NCIMB 8712).